Consider the following 233-residue polypeptide: 5'-methylthioadenosine/S-adenosylhomocysteine nucleosidase (233 aa).

Catalysis depends on glutamate 12, which acts as the Proton acceptor. Substrate is bound by residues glycine 78, isoleucine 156, and 177–178; that span reads ME. The active-site Proton donor is aspartate 201.

The protein belongs to the PNP/UDP phosphorylase family. MtnN subfamily.

The enzyme catalyses S-adenosyl-L-homocysteine + H2O = S-(5-deoxy-D-ribos-5-yl)-L-homocysteine + adenine. It carries out the reaction S-methyl-5'-thioadenosine + H2O = 5-(methylsulfanyl)-D-ribose + adenine. It catalyses the reaction 5'-deoxyadenosine + H2O = 5-deoxy-D-ribose + adenine. It functions in the pathway amino-acid biosynthesis; L-methionine biosynthesis via salvage pathway; S-methyl-5-thio-alpha-D-ribose 1-phosphate from S-methyl-5'-thioadenosine (hydrolase route): step 1/2. Functionally, catalyzes the irreversible cleavage of the glycosidic bond in both 5'-methylthioadenosine (MTA) and S-adenosylhomocysteine (SAH/AdoHcy) to adenine and the corresponding thioribose, 5'-methylthioribose and S-ribosylhomocysteine, respectively. Also cleaves 5'-deoxyadenosine, a toxic by-product of radical S-adenosylmethionine (SAM) enzymes, into 5-deoxyribose and adenine. This is 5'-methylthioadenosine/S-adenosylhomocysteine nucleosidase from Listeria innocua serovar 6a (strain ATCC BAA-680 / CLIP 11262).